We begin with the raw amino-acid sequence, 201 residues long: dTTP/UTP pyrophosphatase (201 aa).

Catalysis depends on aspartate 76, which acts as the Proton acceptor.

It belongs to the Maf family. YhdE subfamily. It depends on a divalent metal cation as a cofactor.

It localises to the cytoplasm. It catalyses the reaction dTTP + H2O = dTMP + diphosphate + H(+). It carries out the reaction UTP + H2O = UMP + diphosphate + H(+). Nucleoside triphosphate pyrophosphatase that hydrolyzes dTTP and UTP. May have a dual role in cell division arrest and in preventing the incorporation of modified nucleotides into cellular nucleic acids. This is dTTP/UTP pyrophosphatase from Neisseria meningitidis serogroup A / serotype 4A (strain DSM 15465 / Z2491).